Here is a 140-residue protein sequence, read N- to C-terminus: Putative membrane protein ORF7 (140 aa).

A helical membrane pass occupies residues 44 to 60 (TCAVSFFALFMLIIWVL). Residues 66 to 118 (PEGSTTRGTDAHTQTEGSTTRGTDAHTQTEGSRDQGSMTPEADDLTRPPLGHG) form a disordered region. Positions 68–103 (GSTTRGTDAHTQTEGSTTRGTDAHTQTEGSRDQGSM) are enriched in polar residues.

The protein localises to the membrane. In Ictalurid herpesvirus 1 (strain Auburn) (IcHV-1), this protein is Putative membrane protein ORF7 (ORF7).